A 179-amino-acid polypeptide reads, in one-letter code: Large ribosomal subunit protein uL5 (179 aa).

Belongs to the universal ribosomal protein uL5 family. Part of the 50S ribosomal subunit; part of the 5S rRNA/L5/L18/L25 subcomplex. Contacts the 5S rRNA and the P site tRNA. Forms a bridge to the 30S subunit in the 70S ribosome.

Functionally, this is one of the proteins that bind and probably mediate the attachment of the 5S RNA into the large ribosomal subunit, where it forms part of the central protuberance. In the 70S ribosome it contacts protein S13 of the 30S subunit (bridge B1b), connecting the 2 subunits; this bridge is implicated in subunit movement. Contacts the P site tRNA; the 5S rRNA and some of its associated proteins might help stabilize positioning of ribosome-bound tRNAs. The protein is Large ribosomal subunit protein uL5 of Alkaliphilus oremlandii (strain OhILAs) (Clostridium oremlandii (strain OhILAs)).